A 76-amino-acid polypeptide reads, in one-letter code: MRSAMVVLVLVAMVAVFTRAQELKYPEREVVAELAAQIYGWPGSLGTMAGGPHKRNSELINSILGLPKVMNEAGRR.

Residues 1-20 (MRSAMVVLVLVAMVAVFTRA) form the signal peptide. Ala73 is subject to Alanine amide.

The protein belongs to the arthropod PDH family. Optical ganglia of the eyestalk.

The protein localises to the secreted. In terms of biological role, the pigment-dispersing hormone causes the migration of the distal retinal pigment into the proximal end of the pigment chromatophore cells and thus decreases the amount of light entering the retinulas. May also function as a neurotransmitter and/or neuromodulator. The protein is Pigment-dispersing hormone A peptides of Faxonius limosus (Spinycheek crayfish).